The chain runs to 558 residues: Methionine--tRNA ligase 1 (558 aa).

The 'HIGH' region signature appears at 10-20 (PYINGIKHLGN). The Zn(2+) site is built by Cys-142, Cys-145, Cys-155, and Cys-158. Positions 332 to 336 (KFSTS) match the 'KMSKS' region motif. Residue Thr-335 participates in ATP binding.

This sequence belongs to the class-I aminoacyl-tRNA synthetase family. MetG type 1 subfamily. As to quaternary structure, monomer. Zn(2+) is required as a cofactor.

It localises to the cytoplasm. The enzyme catalyses tRNA(Met) + L-methionine + ATP = L-methionyl-tRNA(Met) + AMP + diphosphate. Its function is as follows. Is required not only for elongation of protein synthesis but also for the initiation of all mRNA translation through initiator tRNA(fMet) aminoacylation. In Acaryochloris marina (strain MBIC 11017), this protein is Methionine--tRNA ligase 1.